Consider the following 339-residue polypeptide: Dihydroorotate dehydrogenase (quinone) (339 aa).

Residues 64–68 (AGADK) and Thr-88 each bind FMN. Lys-68 contributes to the substrate binding site. 113–117 (NRNGF) is a binding site for substrate. The FMN site is built by Asn-141 and Asn-174. Asn-174 contacts substrate. Ser-177 acts as the Nucleophile in catalysis. Asn-179 lines the substrate pocket. 2 residues coordinate FMN: Lys-219 and Thr-247. 248 to 249 (NT) provides a ligand contact to substrate. FMN contacts are provided by residues Gly-270, Gly-299, and 320–321 (YS).

It belongs to the dihydroorotate dehydrogenase family. Type 2 subfamily. Monomer. It depends on FMN as a cofactor.

The protein resides in the cell membrane. It carries out the reaction (S)-dihydroorotate + a quinone = orotate + a quinol. Its pathway is pyrimidine metabolism; UMP biosynthesis via de novo pathway; orotate from (S)-dihydroorotate (quinone route): step 1/1. In terms of biological role, catalyzes the conversion of dihydroorotate to orotate with quinone as electron acceptor. The polypeptide is Dihydroorotate dehydrogenase (quinone) (pyrD) (Pasteurella multocida (strain Pm70)).